Here is a 591-residue protein sequence, read N- to C-terminus: Splicing factor U2af large subunit A (591 aa).

Residues 1–215 form a disordered region; that stretch reads MAEHDAPPES…QSKRMSGFDQ (215 aa). Residues 27–36 are compositionally biased toward polar residues; it reads SPQQDAQPLS. Basic and acidic residues-rich tracts occupy residues 37-79 and 157-191; these read SRDR…SRDR and RERSERREHRDRSDDRDYRRSCDRDAERRDRDRDG. RRM domains are found at residues 272-355 and 392-470; these read RRVY…RPTD and DRIF…RANQ.

Belongs to the splicing factor SR family.

It is found in the nucleus. Its function is as follows. Necessary for the splicing of pre-mRNA. In Triticum aestivum (Wheat), this protein is Splicing factor U2af large subunit A (U2AF65A).